The chain runs to 185 residues: Ribosome-recycling factor (185 aa).

It belongs to the RRF family.

It is found in the cytoplasm. Functionally, responsible for the release of ribosomes from messenger RNA at the termination of protein biosynthesis. May increase the efficiency of translation by recycling ribosomes from one round of translation to another. This chain is Ribosome-recycling factor, found in Sodalis glossinidius (strain morsitans).